A 176-amino-acid polypeptide reads, in one-letter code: Ribosome maturation factor RimM (176 aa).

In terms of domain architecture, PRC barrel spans 97–176 (EDEFYWRDLI…QILVDWDPDF (80 aa)).

It belongs to the RimM family. As to quaternary structure, binds ribosomal protein uS19.

Its subcellular location is the cytoplasm. An accessory protein needed during the final step in the assembly of 30S ribosomal subunit, possibly for assembly of the head region. Essential for efficient processing of 16S rRNA. May be needed both before and after RbfA during the maturation of 16S rRNA. It has affinity for free ribosomal 30S subunits but not for 70S ribosomes. The polypeptide is Ribosome maturation factor RimM (Shewanella loihica (strain ATCC BAA-1088 / PV-4)).